The following is a 401-amino-acid chain: Chalcone synthase 2 (401 aa).

Cysteine 168 is a catalytic residue.

It belongs to the thiolase-like superfamily. Chalcone/stilbene synthases family.

It carries out the reaction (E)-4-coumaroyl-CoA + 3 malonyl-CoA + 3 H(+) = 2',4,4',6'-tetrahydroxychalcone + 3 CO2 + 4 CoA. It functions in the pathway secondary metabolite biosynthesis; flavonoid biosynthesis. Functionally, the primary product of this enzyme is 4,2',4',6'-tetrahydroxychalcone (also termed naringenin-chalcone or chalcone) which can under specific conditions spontaneously isomerize into naringenin. This Sorghum bicolor (Sorghum) protein is Chalcone synthase 2 (CHS2).